We begin with the raw amino-acid sequence, 189 residues long: Recombination protein RecR (189 aa).

A C4-type zinc finger spans residues 48-63; that stretch reads CQTCFHLSAEPTCEIC. One can recognise a Toprim domain in the interval 71 to 165; sequence GMLCVVADSR…EVSRIAYGLP (95 aa).

It belongs to the RecR family.

Functionally, may play a role in DNA repair. It seems to be involved in an RecBC-independent recombinational process of DNA repair. It may act with RecF and RecO. The protein is Recombination protein RecR of Synechococcus sp. (strain CC9311).